We begin with the raw amino-acid sequence, 227 residues long: (S)-2-haloacid dehalogenase (227 aa).

The active-site Nucleophile is D10. An (S)-2-haloacid contacts are provided by residues 11–12, R41, and 118–119; these read LY and SN. An important for catalytic activity region spans residues 175–180; that stretch reads SSNAWD.

Belongs to the HAD-like hydrolase superfamily. S-2-haloalkanoic acid dehalogenase family.

The enzyme catalyses an (S)-2-haloacid + H2O = a (2R)-2-hydroxycarboxylate + a halide anion + H(+). The catalysed reaction is (S)-2-chloropropanoate + H2O = (R)-lactate + chloride + H(+). Its function is as follows. Catalyzes the hydrolytic dehalogenation of small (S)-2-haloalkanoic acids to yield the corresponding (R)-2-hydroxyalkanoic acids. Acts on acids of short chain lengths, C(2) to C(4), with inversion of configuration at C-2. Active with 2-halogenated carboxylic acids and converts only the S-isomer (or L-isomer) of 2-chloropropionic acid with inversion of configuration to produce R-lactate (or D-isomer). The polypeptide is (S)-2-haloacid dehalogenase (dhl VII) (Pseudomonas fluorescens).